A 61-amino-acid chain; its full sequence is Small ribosomal subunit protein uS14B (61 aa).

Zn(2+)-binding residues include Cys-24, Cys-27, Cys-40, and Cys-43.

The protein belongs to the universal ribosomal protein uS14 family. Zinc-binding uS14 subfamily. As to quaternary structure, part of the 30S ribosomal subunit. Contacts proteins S3 and S10. It depends on Zn(2+) as a cofactor.

Binds 16S rRNA, required for the assembly of 30S particles and may also be responsible for determining the conformation of the 16S rRNA at the A site. The sequence is that of Small ribosomal subunit protein uS14B from Mycobacterium ulcerans (strain Agy99).